The sequence spans 108 residues: MKDVTKVALLIARAMCASSGTFVFELAFSITEYTGRPLGGGRSKYARRRRAISIARCHRCYRLWPPTVFTTRCDNKHCVPGISYNVRVAQFIDEGVTEVIPSVINKRE.

Positions 47-50 (RRRR) are basic. Residues 57-78 (CHRCYRLWPPTVFTTRCDNKHC) form a C4-type zinc finger.

Belongs to the carlaviruses nucleic acid-binding protein family.

Functionally, suppressor of viral-induced RNA silencing. Increases the accumulation of viral RNA and enhances viral cell-to-cell movement by inhibiting RNA silencing. The sequence is that of RNA silencing suppressor from Solanum tuberosum (Potato).